We begin with the raw amino-acid sequence, 485 residues long: tRNA sulfurtransferase (485 aa).

Residues 63 to 167 enclose the THUMP domain; it reads DKLVERLSCM…NELLYLVTAI (105 aa). Residues 185-186, Lys-267, Gly-289, and Gln-298 contribute to the ATP site; that span reads LI. A disulfide bridge links Cys-346 with Cys-458. A Rhodanese domain is found at 406-485; it reads LAENEVILDI…FNNIKVYRQN (80 aa). Cys-458 serves as the catalytic Cysteine persulfide intermediate.

The protein belongs to the ThiI family.

It localises to the cytoplasm. It carries out the reaction [ThiI sulfur-carrier protein]-S-sulfanyl-L-cysteine + a uridine in tRNA + 2 reduced [2Fe-2S]-[ferredoxin] + ATP + H(+) = [ThiI sulfur-carrier protein]-L-cysteine + a 4-thiouridine in tRNA + 2 oxidized [2Fe-2S]-[ferredoxin] + AMP + diphosphate. The catalysed reaction is [ThiS sulfur-carrier protein]-C-terminal Gly-Gly-AMP + S-sulfanyl-L-cysteinyl-[cysteine desulfurase] + AH2 = [ThiS sulfur-carrier protein]-C-terminal-Gly-aminoethanethioate + L-cysteinyl-[cysteine desulfurase] + A + AMP + 2 H(+). Its pathway is cofactor biosynthesis; thiamine diphosphate biosynthesis. Catalyzes the ATP-dependent transfer of a sulfur to tRNA to produce 4-thiouridine in position 8 of tRNAs, which functions as a near-UV photosensor. Also catalyzes the transfer of sulfur to the sulfur carrier protein ThiS, forming ThiS-thiocarboxylate. This is a step in the synthesis of thiazole, in the thiamine biosynthesis pathway. The sulfur is donated as persulfide by IscS. This is tRNA sulfurtransferase from Tolumonas auensis (strain DSM 9187 / NBRC 110442 / TA 4).